The following is a 329-amino-acid chain: MLIPPFILWDVGYSVYTYGSIFIIALIIWQVKRSHRGLRMGPTKSCAKCFRRIKQTPSDRATRAKRTSKEEAEKLQKLLDTMKSQGWLPQEGSVRRLLCPDPSCSICNAMTLEIQQLLGVENKKTSSSLLRPSRSFSCLEALSPSKSLADRSSELTYQDTRDVSLSSRFPQSQETDQQSTRSATPSIGDAVLQCYHSAPQQQLDPQGSKMTQDAKGLSSSSTDEPGVPANQQKKRKKTKKLALKNQAAPTEVETENKMTFFSHWVNPEVKCDRQEESLVFSKYDTGAKPMTVEPEKTHSPVRDQAEGAEKKKKPECDLKAKPLRAKRNI.

Residues 11-31 (VGYSVYTYGSIFIIALIIWQV) form a helical membrane-spanning segment. A coiled-coil region spans residues 58 to 85 (SDRATRAKRTSKEEAEKLQKLLDTMKSQ). Disordered regions lie at residues 149–184 (ADRSSELTYQDTRDVSLSSRFPQSQETDQQSTRSAT), 201–250 (QQLD…AAPT), and 288–329 (KPMT…KRNI). Residues Ser-152 and Ser-153 each carry the phosphoserine modification. 2 stretches are compositionally biased toward polar residues: residues 154-184 (ELTYQDTRDVSLSSRFPQSQETDQQSTRSAT) and 201-223 (QQLDPQGSKMTQDAKGLSSSSTD). A compositionally biased stretch (basic residues) spans 232-242 (QKKRKKTKKLA). The span at 293 to 320 (EPEKTHSPVRDQAEGAEKKKKPECDLKA) shows a compositional bias: basic and acidic residues.

This sequence belongs to the SPATA31 family.

The protein resides in the membrane. The protein is Protein SPATA31F3 of Rattus norvegicus (Rat).